A 369-amino-acid chain; its full sequence is MQTKLFYFFVLLSFIPGFFLVQQEQFVALSIWIILITLFSLWYDWKFCLLNLTIVGFFIAFCYFVPAVKINQIVKNNFIRTPFINWIDQTTKGELNQYLKLFLINETTKNNLYQNALKLNIVHLFVISGFHLSFLFNLMERFLWKRWYLNKLSGFAVLLIYLFLVGFAFSALRVFISTLLKQVFKKQLPEDNLSLTALLIILISNHALNNFGFNFSFLACFVLLFVNKLKLLKALKPLVSSSLILIVISPLSLYLNSRLNAFSVLFNLLFSPIALFYFCVSWIILPFIGVFGQASFGIYLPLKMLSEWSLKVTVFLQIPKPNLIFFFVYYGLLGLLYTIFTVAYYDNNLWSRYWANSPKIKSNQKQFSI.

The next 9 membrane-spanning stretches (helical) occupy residues 25–45 (QFVA…WYDW), 47–67 (FCLL…FVPA), 119–139 (LNIV…FNLM), 152–172 (LSGF…FSAL), 206–226 (HALN…LLFV), 235–255 (LKPL…SLYL), 272–292 (PIAL…GVFG), 296–316 (FGIY…TVFL), and 323–343 (LIFF…FTVA).

To B.subtilis ComEC.

The protein resides in the cell membrane. This is an uncharacterized protein from Mycoplasma genitalium (strain ATCC 33530 / DSM 19775 / NCTC 10195 / G37) (Mycoplasmoides genitalium).